The following is a 100-amino-acid chain: NADH-quinone oxidoreductase subunit K 2 (100 aa).

3 consecutive transmembrane segments (helical) span residues 4–24, 29–49, and 60–80; these read LNNY…GVLV, IVIF…FIAF, and IFVF…LALM.

Belongs to the complex I subunit 4L family. In terms of assembly, NDH-1 is composed of 14 different subunits. Subunits NuoA, H, J, K, L, M, N constitute the membrane sector of the complex.

Its subcellular location is the cell inner membrane. The catalysed reaction is a quinone + NADH + 5 H(+)(in) = a quinol + NAD(+) + 4 H(+)(out). In terms of biological role, NDH-1 shuttles electrons from NADH, via FMN and iron-sulfur (Fe-S) centers, to quinones in the respiratory chain. The immediate electron acceptor for the enzyme in this species is believed to be ubiquinone. Couples the redox reaction to proton translocation (for every two electrons transferred, four hydrogen ions are translocated across the cytoplasmic membrane), and thus conserves the redox energy in a proton gradient. This chain is NADH-quinone oxidoreductase subunit K 2, found in Geotalea uraniireducens (strain Rf4) (Geobacter uraniireducens).